The chain runs to 336 residues: Dual specificity mitogen-activated protein kinase kinase sek-1 (336 aa).

A Protein kinase domain is found at 50 to 311 (LVVLEELGKG…YPELLAMPFM (262 aa)). Residues 56–64 (LGKGGYGIV) and Lys79 each bind ATP. Asp176 acts as the Proton acceptor in catalysis. Position 204 is a phosphoserine (Ser204). At Thr208 the chain carries Phosphothreonine.

The protein belongs to the protein kinase superfamily. STE Ser/Thr protein kinase family. MAP kinase kinase subfamily. In terms of assembly, interacts with nsy-1. Interacts with unc-16. Mg(2+) is required as a cofactor. Expressed in linker cell in males.

It carries out the reaction L-seryl-[protein] + ATP = O-phospho-L-seryl-[protein] + ADP + H(+). It catalyses the reaction L-threonyl-[protein] + ATP = O-phospho-L-threonyl-[protein] + ADP + H(+). The catalysed reaction is L-tyrosyl-[protein] + ATP = O-phospho-L-tyrosyl-[protein] + ADP + H(+). Activated by nsy-1-mediated phosphorylation. In terms of biological role, dual specificity protein kinase which acts as an essential component of the p38 signal transduction pathway which is also composed of upstream effector nsy-1 and downstream effector pmk-1. May phosphorylate pmk-1. Downstream of CaMKII unc-43 and adapter protein tir-1, plays a role in determining asymmetric cell fates in olfactory AWC neurons during neuronal development. Activation results in the repression of odorant receptor str-2 expression in one of the 2 AWC neurons. Involved in resistance to pathogenic Gram-positive and Gram-negative bacterial and fungal infection. Involved in resistance to the nematotoxic C.cinerea galectin Cgl2. Probably by promoting pmk-1-mediated activation of skn-1, involved in the up-regulation of gcs-1 and glutathione-S-transferase gst-4 expression upon bacterial infection. Probably downstream of tir-1, required for the expression of antimicrobial peptide nlp-29 in the epidermis in response to fungal infection or physical injury. Regulates susceptibility of B.thuringiensis pore-forming toxin Cry5B and Cry21A. Involved in the response to oxidative stress. May regulate transcription factor daf-16 localization during oxidative stress. By phosphorylating pmk-1, regulates skn-1 localization during oxidative stress. By phosphorylating and activating pmk-1, plays a role in the stabilization of transcription factor rnt-1 in the intestine during oxidative stress. Up-regulates expression of gcs-1 in intestine upon arsenite treatment. Regulates germline proliferation in response to osmotic stress, starvation and germline apoptosis induced by heavy metals, such as Cu(2+). In association with mek-1, regulates germline cell apoptosis in response to oxidative, osmotic and heat shock stresses. Plays a role downstream of tir-1/nsy-1 in regulating susceptibility to anoxia. In males, by regulating pqn-41 expression, involved in non-apoptotic death of the linker cell which guides gonad elongation during larval development. Involved in egg laying. The protein is Dual specificity mitogen-activated protein kinase kinase sek-1 of Caenorhabditis elegans.